The sequence spans 147 residues: Basic phospholipase A2 beta-bungarotoxin A1 chain (147 aa).

A signal peptide spans 1–19; it reads MNPAHLLVLSAVCVSLLGA. A propeptide spanning residues 20-27 is cleaved from the precursor; that stretch reads ANIPPHPL. 6 cysteine pairs are disulfide-bonded: Cys-54-Cys-146, Cys-56-Cys-72, Cys-71-Cys-127, Cys-78-Cys-120, Cys-88-Cys-113, and Cys-106-Cys-118. Ca(2+) is bound by residues Tyr-55, Gly-57, and Gly-59. Residue His-75 is part of the active site. Asp-76 is a Ca(2+) binding site. Residue Asp-121 is part of the active site.

It belongs to the phospholipase A2 family. Group I subfamily. D49 sub-subfamily. In terms of assembly, heterodimer; disulfide-linked. The A chains have phospholipase A2 activity and the B chains show homology with the basic protease inhibitors. The A1 chain is found in beta-1 and beta-2 bungarotoxins. The cofactor is Ca(2+). As to expression, expressed by the venom gland.

The protein localises to the secreted. It carries out the reaction a 1,2-diacyl-sn-glycero-3-phosphocholine + H2O = a 1-acyl-sn-glycero-3-phosphocholine + a fatty acid + H(+). Snake venom phospholipase A2 (PLA2) that inhibits neuromuscular transmission by blocking acetylcholine release from the nerve termini. PLA2 catalyzes the calcium-dependent hydrolysis of the 2-acyl groups in 3-sn-phosphoglycerides. This is Basic phospholipase A2 beta-bungarotoxin A1 chain from Bungarus multicinctus (Many-banded krait).